Consider the following 251-residue polypeptide: Isoprenyl transferase (251 aa).

Residue aspartate 24 is part of the active site. Mg(2+) is bound at residue aspartate 24. Residues glycine 25–arginine 28, tryptophan 29, arginine 37, histidine 41, and serine 69–glutamate 71 contribute to the substrate site. Asparagine 72 (proton acceptor) is an active-site residue. Substrate contacts are provided by residues tryptophan 73, arginine 75, arginine 186, and arginine 192–serine 194. Glutamate 205 provides a ligand contact to Mg(2+).

The protein belongs to the UPP synthase family. As to quaternary structure, homodimer. Requires Mg(2+) as cofactor.

Catalyzes the condensation of isopentenyl diphosphate (IPP) with allylic pyrophosphates generating different type of terpenoids. This chain is Isoprenyl transferase, found in Chromobacterium violaceum (strain ATCC 12472 / DSM 30191 / JCM 1249 / CCUG 213 / NBRC 12614 / NCIMB 9131 / NCTC 9757 / MK).